The following is a 295-amino-acid chain: Nucleotide-binding protein SSU98_0619 (295 aa).

Position 12–19 (12–19 (GMSGAGKT)) interacts with ATP. A GTP-binding site is contributed by 62–65 (DMRS).

It belongs to the RapZ-like family.

Functionally, displays ATPase and GTPase activities. This is Nucleotide-binding protein SSU98_0619 from Streptococcus suis (strain 98HAH33).